We begin with the raw amino-acid sequence, 928 residues long: Probable outer membrane protein pmp10 (928 aa).

The N-terminal stretch at 1-25 is a signal peptide; that stretch reads MKSQFSWLVLSSTLACFTSCSTVFA. The 294-residue stretch at 635-928 folds into the Autotransporter domain; the sequence is TLCSDRGFWA…NVDLGGKFQF (294 aa).

This sequence belongs to the PMP outer membrane protein family.

Its subcellular location is the secreted. It localises to the cell wall. It is found in the cell outer membrane. The protein is Probable outer membrane protein pmp10 (pmp10) of Chlamydia pneumoniae (Chlamydophila pneumoniae).